The sequence spans 480 residues: F-box/LRR-repeat protein 14 (480 aa).

The 48-residue stretch at 11–58 (DRQMDELPDHLVWDILSKLHTTDDRNSLSLSCKRFFSLDNEQRYSLRI) folds into the F-box domain. LRR repeat units follow at residues 61-86 (GLVP…EIIY), 94-119 (GKQV…TLSF), 120-144 (CTFI…KLNF), 145-170 (APRI…HLIR), 171-196 (CLNV…CIKN), 197-222 (CRAI…QFEV), 229-257 (MKVY…SLGN), 258-283 (CIIA…HLDM), 284-309 (CTGV…SLRV), 322-347 (TLRL…KISF), 355-379 (LFSF…SLDH), 380-404 (VCVF…ELVH), 405-429 (CQEV…KLSK), 430-454 (CLGV…VVED), and 455-480 (CPQV…SWMY).

In Arabidopsis thaliana (Mouse-ear cress), this protein is F-box/LRR-repeat protein 14 (FBL14).